The sequence spans 428 residues: Light-independent protochlorophyllide reductase subunit N (428 aa).

[4Fe-4S] cluster is bound by residues Cys31, Cys56, and Cys117.

It belongs to the BchN/ChlN family. As to quaternary structure, protochlorophyllide reductase is composed of three subunits; BchL, BchN and BchB. Forms a heterotetramer of two BchB and two BchN subunits. [4Fe-4S] cluster is required as a cofactor.

The catalysed reaction is chlorophyllide a + oxidized 2[4Fe-4S]-[ferredoxin] + 2 ADP + 2 phosphate = protochlorophyllide a + reduced 2[4Fe-4S]-[ferredoxin] + 2 ATP + 2 H2O. Its pathway is porphyrin-containing compound metabolism; bacteriochlorophyll biosynthesis (light-independent). In terms of biological role, component of the dark-operative protochlorophyllide reductase (DPOR) that uses Mg-ATP and reduced ferredoxin to reduce ring D of protochlorophyllide (Pchlide) to form chlorophyllide a (Chlide). This reaction is light-independent. The NB-protein (BchN-BchB) is the catalytic component of the complex. The protein is Light-independent protochlorophyllide reductase subunit N of Rhodopseudomonas palustris (strain BisB18).